A 601-amino-acid chain; its full sequence is Arginine--tRNA ligase (601 aa).

A 'HIGH' region motif is present at residues 135-145 (ANPTGPLHLGH).

This sequence belongs to the class-I aminoacyl-tRNA synthetase family. Monomer.

Its subcellular location is the cytoplasm. It catalyses the reaction tRNA(Arg) + L-arginine + ATP = L-arginyl-tRNA(Arg) + AMP + diphosphate. The sequence is that of Arginine--tRNA ligase from Gloeobacter violaceus (strain ATCC 29082 / PCC 7421).